A 98-amino-acid chain; its full sequence is Small ribosomal subunit protein uS19 (98 aa).

The tract at residues 77–98 (TRTFRGHAGGKAEKGGSAPRKK) is disordered.

Belongs to the universal ribosomal protein uS19 family.

Functionally, protein S19 forms a complex with S13 that binds strongly to the 16S ribosomal RNA. The chain is Small ribosomal subunit protein uS19 from Chlorobium limicola (strain DSM 245 / NBRC 103803 / 6330).